Here is a 513-residue protein sequence, read N- to C-terminus: ATP synthase subunit alpha (513 aa).

169–176 (GDRQTGKT) provides a ligand contact to ATP.

The protein belongs to the ATPase alpha/beta chains family. As to quaternary structure, F-type ATPases have 2 components, CF(1) - the catalytic core - and CF(0) - the membrane proton channel. CF(1) has five subunits: alpha(3), beta(3), gamma(1), delta(1), epsilon(1). CF(0) has three main subunits: a(1), b(2) and c(9-12). The alpha and beta chains form an alternating ring which encloses part of the gamma chain. CF(1) is attached to CF(0) by a central stalk formed by the gamma and epsilon chains, while a peripheral stalk is formed by the delta and b chains.

The protein localises to the cell inner membrane. The catalysed reaction is ATP + H2O + 4 H(+)(in) = ADP + phosphate + 5 H(+)(out). Functionally, produces ATP from ADP in the presence of a proton gradient across the membrane. The alpha chain is a regulatory subunit. This is ATP synthase subunit alpha from Salmonella arizonae (strain ATCC BAA-731 / CDC346-86 / RSK2980).